The primary structure comprises 602 residues: UvrABC system protein C (602 aa).

One can recognise a GIY-YIG domain in the interval 17–94 (TTSGCYKMYS…IKEHKPDYNI (78 aa)). One can recognise a UVR domain in the interval 199–234 (SKLLDEIEIKMKEVIKREDFESAIKLKETKRSLIEI).

The protein belongs to the UvrC family. As to quaternary structure, interacts with UvrB in an incision complex.

It is found in the cytoplasm. Its function is as follows. The UvrABC repair system catalyzes the recognition and processing of DNA lesions. UvrC both incises the 5' and 3' sides of the lesion. The N-terminal half is responsible for the 3' incision and the C-terminal half is responsible for the 5' incision. The chain is UvrABC system protein C from Borrelia turicatae (strain 91E135).